Here is a 45-residue protein sequence, read N- to C-terminus: uncharacterized protein (45 aa).

The helical transmembrane segment at 5 to 25 threads the bilayer; the sequence is IFFIFALSGILAACTVGGGVS.

It is found in the membrane. This is an uncharacterized protein from Haemophilus influenzae (strain ATCC 51907 / DSM 11121 / KW20 / Rd).